We begin with the raw amino-acid sequence, 181 residues long: Adenine phosphoribosyltransferase (181 aa).

Belongs to the purine/pyrimidine phosphoribosyltransferase family. Homodimer.

Its subcellular location is the cytoplasm. The enzyme catalyses AMP + diphosphate = 5-phospho-alpha-D-ribose 1-diphosphate + adenine. Its pathway is purine metabolism; AMP biosynthesis via salvage pathway; AMP from adenine: step 1/1. Functionally, catalyzes a salvage reaction resulting in the formation of AMP, that is energically less costly than de novo synthesis. In Rhizobium leguminosarum bv. trifolii (strain WSM2304), this protein is Adenine phosphoribosyltransferase.